The following is a 236-amino-acid chain: Reticulon-3 (236 aa).

Low complexity predominate over residues 1–24 (MAEPSAATQSPSISSSSSGAEPSA). Positions 1–31 (MAEPSAATQSPSISSSSSGAEPSAPGGGGSP) are disordered. Position 2 is an N-acetylalanine (Ala-2). The Cytoplasmic portion of the chain corresponds to 2-67 (AEPSAATQSP…KKTGFVFGTT (66 aa)). Ser-30 is subject to Phosphoserine. One can recognise a Reticulon domain in the interval 48 to 236 (VHDLIFWRDV…LPGIAKKKAE (189 aa)). Residues 68 to 91 (LIMLLSLAAFSVISVVSYLILALL) constitute an intramembrane region (helical). Residues 92-151 (SVTISFRIYKSVIQAVQKSEEGHPFKAYLDVDITLSSEAFHNYMNAAMVHINRALKLIIR) lie on the Cytoplasmic side of the membrane. The helical intramembrane region spans 152-172 (LFLVEDLVDSLKLAVFMWLMT). The Cytoplasmic segment spans residues 173–176 (YVGA). The helical intramembrane region spans 177–197 (VFNGITLLILAELLIFSVPIV). The segment at 191 to 236 (IFSVPIVYEKYKTQIDHYVGIARDQTKSIVEKIQAKLPGIAKKKAE) is interaction with FADD. Over 198–236 (YEKYKTQIDHYVGIARDQTKSIVEKIQAKLPGIAKKKAE) the chain is Cytoplasmic. The tract at residues 204–206 (QID) is interaction with BACE1.

Homodimer. Interacts with RTN4. Interacts with BACE1, BACE2, BCL2 and FADD. Interacts with ATL1 and ATL2. Interacts with TMEM33. Interacts with ZFYVE27 and with KIF5A in a ZFYVE27-dependent manner. Interacts with RIGI. Interacts with TRIM25.

The protein resides in the endoplasmic reticulum membrane. It is found in the golgi apparatus membrane. In terms of biological role, may be involved in membrane trafficking in the early secretory pathway. Inhibits BACE1 activity and amyloid precursor protein processing. May induce caspase-8 cascade and apoptosis. May favor BCL2 translocation to the mitochondria upon endoplasmic reticulum stress. Induces the formation of endoplasmic reticulum tubules. Acts also as an inflammation-resolving regulator by interacting with both TRIM25 and RIGI, subsequently impairing RIGI 'Lys-63'-linked polyubiquitination leading to IRF3 and NF-kappa-B inhibition. The protein is Reticulon-3 (RTN3) of Pongo abelii (Sumatran orangutan).